The primary structure comprises 239 residues: Probable transcriptional regulatory protein LMOf2365_0385 (239 aa).

The protein belongs to the TACO1 family. YeeN subfamily.

Its subcellular location is the cytoplasm. In Listeria monocytogenes serotype 4b (strain F2365), this protein is Probable transcriptional regulatory protein LMOf2365_0385.